A 1003-amino-acid chain; its full sequence is Leucine-rich repeat receptor-like serine/threonine-protein kinase BAM1 (1003 aa).

Positions 1–19 (MKLFLLLLFLLHISHTFTA) are cleaved as a signal peptide. Residues 20–640 (SRPISEFRAL…HSKGPLSASM (621 aa)) are Extracellular-facing. LRR repeat units lie at residues 68–92 (RRHVTSLDLSGLNLSGTLSPDVSHL), 93–116 (RLLQNLSLAENLISGPIPPEISSL), 117–140 (SGLRHLNLSNNVFNGSFPDEISSG), 142–165 (VNLRVLDVYNNNLTGDLPVSVTNL), 166–191 (TQLRHLHLGGNYFAGKIPPSYGSWPV), 193–213 (EYLAVSGNELVGKIPPEIGNL), 215–238 (TLRELYIGYYNAFEDGLPPEIGNL), 239–262 (SELVRFDGANCGLTGEIPPEIGKL), 263–285 (QKLDTLFLQVNVFSGPLTWELGT), 286–310 (LSSLKSMDLSNNMFTGEIPASFAEL), 312–334 (NLTLLNLFRNKLHGEIPEFIGDL), 335–358 (PELEVLQLWENNFTGSIPQKLGEN), 359–382 (GKLNLVDLSSNKLTGTLPPNMCSG), 385–406 (LETLITLGNFLFGSIPDSLGKC), 407–430 (ESLTRIRMGENFLNGSIPKGLFGL), 432–454 (KLTQVELQDNYLSGELPVAGGVS), 455–480 (VNLGQISLSNNQLSGPLPPAIGNFTG), 482–502 (QKLLLDGNKFQGPIPSEVGKL), 503–526 (QQLSKIDFSHNLFSGRIAPEISRC), 527–550 (KLLTFVDLSRNELSGEIPNEITAM), 551–574 (KILNYLNLSRNHLVGSIPGSISSM), and 575–598 (QSLTSLDFSYNNLSGLVPGTGQFS). N-linked (GlcNAc...) asparagine glycans are attached at residues N80, N97, N123, N130, N153, and N164. N-linked (GlcNAc...) asparagine glycans are attached at residues N212 and N237. Residues N312 and N346 are each glycosylated (N-linked (GlcNAc...) asparagine). N420 is a glycosylation site (N-linked (GlcNAc...) asparagine). N-linked (GlcNAc...) asparagine glycosylation is present at N477. N557, N586, and N601 each carry an N-linked (GlcNAc...) asparagine glycan. Residues 641 to 661 (KLLLVLGLLVCSIAFAVVAII) traverse the membrane as a helical segment. Over 662-1003 (KARSLKKASE…VQSPPDLLNL (342 aa)) the chain is Cytoplasmic. A Phosphothreonine modification is found at T686. The Protein kinase domain maps to 694–971 (LKEDNIIGKG…VQILTEIPKL (278 aa)). ATP-binding positions include 700-708 (IGKGGAGIV) and K722. Y769 and Y807 each carry phosphotyrosine. D820 functions as the Proton acceptor in the catalytic mechanism. A Phosphoserine modification is found at S855. Residues Y863 and Y870 each carry the phosphotyrosine modification. T871 bears the Phosphothreonine mark. Positions 969 to 1003 (PKLPPSKDQPMTESAPESELSPKSGVQSPPDLLNL) are disordered. Residue S996 is modified to Phosphoserine.

This sequence belongs to the protein kinase superfamily. Ser/Thr protein kinase family. Self-interacts and interacts with BAM2 and CLV1. Binds to the CLV3, CLE5, CLE11, CLE18, CLE19, CLE22, CLE25, CLE26, CLE40, CLE41 and CLE42 mature peptides, probably via its extracellular leucine-rich repeat region. In terms of tissue distribution, expressed in seedlings, roots, leaves, inflorescences, flowers and siliques.

The protein resides in the cell membrane. It carries out the reaction L-seryl-[protein] + ATP = O-phospho-L-seryl-[protein] + ADP + H(+). It catalyses the reaction L-threonyl-[protein] + ATP = O-phospho-L-threonyl-[protein] + ADP + H(+). In terms of biological role, necessary for male gametophyte development, as well as ovule specification and function. Involved in cell-cell communication process required during early anther development, and regulating cell division and differentiation to organize cell layers. Required for the development of high-ordered vascular strands within the leaf and a correlated control of leaf shape, size and symmetry. May regulate the CLV1-dependent CLV3-mediated signaling in meristems maintenance. The chain is Leucine-rich repeat receptor-like serine/threonine-protein kinase BAM1 (BAM1) from Arabidopsis thaliana (Mouse-ear cress).